The chain runs to 123 residues: uncharacterized protein (123 aa).

The Rhodanese domain maps to 17 to 117 (SNDNAFLVDV…NNQDKGWKQN (101 aa)).

This is an uncharacterized protein from Rickettsia rickettsii.